The following is a 128-amino-acid chain: Cytochrome c oxidase subunit 5B, mitochondrial (128 aa).

The N-terminal 30 residues, 1–30 (MKRGSAALEVRELKMQTPTASCVLSTQRAN), are a transit peptide targeting the mitochondrion. Residues Lys-67 and Lys-85 each carry the N6-acetyllysine modification. Positions 90, 92, 112, and 115 each coordinate Zn(2+). Residue Lys-120 is modified to N6-acetyllysine.

The protein belongs to the cytochrome c oxidase 5b family. In terms of tissue distribution, expressed in testis. Not expressed in brain, heart, liver, kidney, spleen, lung, duodenum, muscle, epididymis, vagina, uterus and ovary.

It is found in the mitochondrion inner membrane. Functionally, this protein is one of the nuclear-coded polypeptide chains of cytochrome c oxidase, the terminal oxidase in mitochondrial electron transport. This is Cytochrome c oxidase subunit 5B, mitochondrial from Vulpes vulpes (Red fox).